Here is a 338-residue protein sequence, read N- to C-terminus: Fructose-bisphosphate aldolase (338 aa).

Substrate-binding residues include arginine 50 and lysine 138. Glutamate 179 acts as the Proton acceptor in catalysis. Lysine 221 (schiff-base intermediate with dihydroxyacetone-P) is an active-site residue.

Belongs to the class I fructose-bisphosphate aldolase family.

It carries out the reaction beta-D-fructose 1,6-bisphosphate = D-glyceraldehyde 3-phosphate + dihydroxyacetone phosphate. It functions in the pathway carbohydrate degradation; glycolysis; D-glyceraldehyde 3-phosphate and glycerone phosphate from D-glucose: step 4/4. The sequence is that of Fructose-bisphosphate aldolase from Encephalitozoon cuniculi (strain GB-M1) (Microsporidian parasite).